A 299-amino-acid polypeptide reads, in one-letter code: MDPTLISLGALALAGAAATVSGCAEDLESDVGSQSNPNSQVQLGPQMGNIHRYFNKAISGEPVSYGLYVAVAGSVAWALINAGLNAVLALIIGSGVAAIVHGAYSVSAFLGRTVGQSQKFGQPVYMDVLTSHIGPIVGHGFIAVFTMVLAAYLAVTALGNPFPLPLVALIFGITVGAIGSSTGDVHYGAEREYQKYAFGGGIPVANQGDIDIYAEYGIRNGLDSSYFCSRLGGPLTGLCFGLIIFLDGWRSIVGNIIGGDLVTKTSIALVVGLLVVVAAMILNRKIEVFARNKYGPYRN.

Transmembrane regions (helical) follow at residues 57-77 (AISG…SVAW), 80-100 (INAG…AAIV), 133-153 (IGPI…AAYL), 158-178 (LGNP…VGAI), 237-257 (GLCF…GNII), and 261-281 (LVTK…AAMI).

Belongs to the MtrE family. The complex is composed of 8 subunits; MtrA, MtrB, MtrC, MtrD, MtrE, MtrF, MtrG and MtrH.

It is found in the cell membrane. It carries out the reaction 5-methyl-5,6,7,8-tetrahydromethanopterin + coenzyme M + 2 Na(+)(in) = 5,6,7,8-tetrahydromethanopterin + methyl-coenzyme M + 2 Na(+)(out). Its pathway is one-carbon metabolism; methanogenesis from CO(2); methyl-coenzyme M from 5,10-methylene-5,6,7,8-tetrahydromethanopterin: step 2/2. Part of a complex that catalyzes the formation of methyl-coenzyme M and tetrahydromethanopterin from coenzyme M and methyl-tetrahydromethanopterin. This is an energy-conserving, sodium-ion translocating step. The chain is Tetrahydromethanopterin S-methyltransferase subunit E from Methanococcus vannielii (strain ATCC 35089 / DSM 1224 / JCM 13029 / OCM 148 / SB).